A 511-amino-acid polypeptide reads, in one-letter code: 2-isopropylmalate synthase (511 aa).

The Pyruvate carboxyltransferase domain occupies 6–269 (IIIFDTTLRD…YTDIKCENIF (264 aa)). Residues D15, H203, H205, and N239 each contribute to the Mn(2+) site. A regulatory domain region spans residues 394 to 511 (VIEKLSVISG…SLKVEERKMA (118 aa)).

The protein belongs to the alpha-IPM synthase/homocitrate synthase family. LeuA type 1 subfamily. In terms of assembly, homodimer. It depends on Mn(2+) as a cofactor.

The protein resides in the cytoplasm. It carries out the reaction 3-methyl-2-oxobutanoate + acetyl-CoA + H2O = (2S)-2-isopropylmalate + CoA + H(+). The protein operates within amino-acid biosynthesis; L-leucine biosynthesis; L-leucine from 3-methyl-2-oxobutanoate: step 1/4. Catalyzes the condensation of the acetyl group of acetyl-CoA with 3-methyl-2-oxobutanoate (2-ketoisovalerate) to form 3-carboxy-3-hydroxy-4-methylpentanoate (2-isopropylmalate). The chain is 2-isopropylmalate synthase from Campylobacter jejuni (strain RM1221).